The primary structure comprises 304 residues: MFEGFERRLVDVGDVTINCVVGGSGPALLLLHGFPQNLHMWARVAPLLANEYTVVCADLRGYGGSSKPVGAPDHANYSFRAMASDQRELMRTLGFERFHLVGHDRGGRTGHRMALDHPDSVLSLAVLDIIPTYVMFEEVDRFVARAYWHWYFLQQPAPYPEKVIGADPDTFYEGCLFGWGATGADGFDPEQLEEYRKQWRDPAAIHGSCCDYRAGGTIDFELDHGDLGRQVQCPALVFSGSAGLMHSLFEMQVVWAPRLANMRFASLPGGHFFVDRFPDDTARILREFLSDARSGIHQTERRES.

Residues 26–151 form the AB hydrolase-1 domain; the sequence is PALLLLHGFP…FVARAYWHWY (126 aa). The active-site Nucleophile is D104. R105, R108, H149, W150, and Y212 together coordinate fluoroacetate. H271 serves as the catalytic Proton acceptor.

The protein belongs to the AB hydrolase superfamily. Epoxide hydrolase family. Homodimer.

It catalyses the reaction a haloacetate + H2O = a halide anion + glycolate + H(+). The enzyme catalyses fluoroacetate + H2O = fluoride + glycolate + H(+). Functionally, catalyzes the hydrolytic defluorination of fluoroacetate to produce glycolate. Has only very low activity towards chloroacetate and bromoacetate. In Burkholderia sp, this protein is Fluoroacetate dehalogenase (fac-dex).